The sequence spans 443 residues: ATP-dependent protease ATPase subunit HslU (443 aa).

Residues I18 and 60 to 65 (GVGKTE) each bind ATP. The disordered stretch occupies residues 137-156 (PPPRDAWGQNEQSEDTSNTR). Over residues 145-156 (QNEQSEDTSNTR) the composition is skewed to polar residues. Residues D256, E321, and R393 each coordinate ATP.

This sequence belongs to the ClpX chaperone family. HslU subfamily. As to quaternary structure, a double ring-shaped homohexamer of HslV is capped on each side by a ring-shaped HslU homohexamer. The assembly of the HslU/HslV complex is dependent on binding of ATP.

The protein localises to the cytoplasm. Its function is as follows. ATPase subunit of a proteasome-like degradation complex; this subunit has chaperone activity. The binding of ATP and its subsequent hydrolysis by HslU are essential for unfolding of protein substrates subsequently hydrolyzed by HslV. HslU recognizes the N-terminal part of its protein substrates and unfolds these before they are guided to HslV for hydrolysis. The polypeptide is ATP-dependent protease ATPase subunit HslU (Vibrio vulnificus (strain YJ016)).